The primary structure comprises 661 residues: NUAK family SNF1-like kinase 1 (661 aa).

An N-acetylmethionine modification is found at methionine 1. The segment at 1-24 is disordered; it reads MEGAAAPVAGDRPDLGLGAPGSPR. A Phosphoserine modification is found at serine 22. Residues 55–306 enclose the Protein kinase domain; it reads YELQETLGKG…IEDIANHWWV (252 aa). ATP is bound by residues 61–69 and lysine 84; that span reads LGKGTYGKV. Residue aspartate 178 is the Proton acceptor of the active site. Position 211 is a phosphothreonine; by LKB1 (threonine 211). Disordered stretches follow at residues 345-421 and 442-570; these read TEAK…EGVV and LPSS…RPSS. Residues 393 to 404 are compositionally biased toward basic residues; it reads SSKRPKGILKKR. The short motif at 399–402 is the GILK motif element; the sequence is GILK. Position 455 is a phosphoserine (serine 455). Basic residues predominate over residues 518–529; it reads SCRRKGILKHSS. Position 600 is a phosphoserine; by PKB/AKT1 (serine 600).

It belongs to the protein kinase superfamily. CAMK Ser/Thr protein kinase family. SNF1 subfamily. As to quaternary structure, interacts (via GILK motif) with PPP1CB; the interaction is direct and bridges NUAK1 and PPP1R12A. Interacts with CDKN1A. Mg(2+) serves as cofactor. Ubiquitinated with 'Lys-29'- and 'Lys-33'-linked polyubiquitins which appear to impede LKB1-mediated phosphorylation. Deubiquitinated by USP9X. In terms of processing, phosphorylated at Thr-211 by STK11/LKB1 in complex with STE20-related adapter-alpha (STRADA) pseudo kinase and CAB39. Not dephosphorylated by the myosin PP1 complex when regulating its activity, due to the presence of PPP1R12A, which prevents myosin PP1 from dephosphorylating NUAK1. Phosphorylated by STK38L upon stimulation with IGF1. Expressed at high levels in heart and brain, and at lower levels in skeletal muscle, kidney, ovary, placenta, lung and liver. Highly up-regulated in colorectal cancer cell lines.

It localises to the nucleus. The protein localises to the cytoplasm. It carries out the reaction L-seryl-[protein] + ATP = O-phospho-L-seryl-[protein] + ADP + H(+). The catalysed reaction is L-threonyl-[protein] + ATP = O-phospho-L-threonyl-[protein] + ADP + H(+). Its activity is regulated as follows. Activated by phosphorylation on Thr-211. Activated by phosphorylation at Ser-600 AKT1 during glucose starvation; the relevance of such activation in normal cells is however unsure. Its function is as follows. Serine/threonine-protein kinase involved in various processes such as cell adhesion, regulation of cell ploidy and senescence, cell proliferation and tumor progression. Phosphorylates ATM, CASP6, LATS1, PPP1R12A and p53/TP53. Acts as a regulator of cellular senescence and cellular ploidy by mediating phosphorylation of 'Ser-464' of LATS1, thereby controlling its stability. Controls cell adhesion by regulating activity of the myosin protein phosphatase 1 (PP1) complex. Acts by mediating phosphorylation of PPP1R12A subunit of myosin PP1: phosphorylated PPP1R12A then interacts with 14-3-3, leading to reduced dephosphorylation of myosin MLC2 by myosin PP1. May be involved in DNA damage response: phosphorylates p53/TP53 at 'Ser-15' and 'Ser-392' and is recruited to the CDKN1A/WAF1 promoter to participate in transcription activation by p53/TP53. May also act as a tumor malignancy-associated factor by promoting tumor invasion and metastasis under regulation and phosphorylation by AKT1. Suppresses Fas-induced apoptosis by mediating phosphorylation of CASP6, thereby suppressing the activation of the caspase and the subsequent cleavage of CFLAR. Regulates UV radiation-induced DNA damage response mediated by CDKN1A. In association with STK11, phosphorylates CDKN1A in response to UV radiation and contributes to its degradation which is necessary for optimal DNA repair. The sequence is that of NUAK family SNF1-like kinase 1 (NUAK1) from Homo sapiens (Human).